We begin with the raw amino-acid sequence, 382 residues long: D-galactonate dehydratase (382 aa).

Residue Asp-183 coordinates Mg(2+). His-185 (proton donor) is an active-site residue. Residues Glu-209 and Glu-235 each contribute to the Mg(2+) site. The active-site Proton acceptor is His-285.

It belongs to the mandelate racemase/muconate lactonizing enzyme family. GalD subfamily. Mg(2+) serves as cofactor.

The enzyme catalyses D-galactonate = 2-dehydro-3-deoxy-D-galactonate + H2O. Its pathway is carbohydrate acid metabolism; D-galactonate degradation; D-glyceraldehyde 3-phosphate and pyruvate from D-galactonate: step 1/3. Its function is as follows. Catalyzes the dehydration of D-galactonate to 2-keto-3-deoxy-D-galactonate. In Escherichia coli (strain UTI89 / UPEC), this protein is D-galactonate dehydratase.